We begin with the raw amino-acid sequence, 66 residues long: Ocellatin-PT1 (66 aa).

The signal sequence occupies residues 1-22 (MAFLKKSLFLVLFLGLVSLSIC). The propeptide occupies 23 to 39 (DEEKRQDEDDDDDDDEE). Valine amide is present on Val66.

Expressed by the skin glands.

Its subcellular location is the secreted. Has antibacterial activity against Gram-negative bacterium E.coli ATCC 25922 (MIC=300 uM) but not against S.pneumoniae ATCC 700603, S.choleraesuis ATCC 14028 or Gram-positive bacterium S.aureus ATCC 29313. Shows virtually no hemolytic activity and no cytotoxicity. The sequence is that of Ocellatin-PT1 from Leptodactylus pustulatus (Ceara white-lipped frog).